The following is a 412-amino-acid chain: uncharacterized protein (412 aa).

It belongs to the PQQ oxidoreductase GdhB family. The cofactor is pyrroloquinoline quinone.

This is an uncharacterized protein from Synechocystis sp. (strain ATCC 27184 / PCC 6803 / Kazusa).